Reading from the N-terminus, the 382-residue chain is Mannitol-1-phosphate 5-dehydrogenase (382 aa).

3 to 14 provides a ligand contact to NAD(+); that stretch reads ALHFGAGNIGRG. K269 is modified (N6-acetyllysine).

Belongs to the mannitol dehydrogenase family.

It catalyses the reaction D-mannitol 1-phosphate + NAD(+) = beta-D-fructose 6-phosphate + NADH + H(+). This Escherichia coli O17:K52:H18 (strain UMN026 / ExPEC) protein is Mannitol-1-phosphate 5-dehydrogenase.